The following is a 118-amino-acid chain: NADH-ubiquinone oxidoreductase chain 3 (118 aa).

A run of 2 helical transmembrane segments spans residues 7 to 27 and 87 to 107; these read ICIY…LPFL and IDPF…IGSL.

Belongs to the complex I subunit 3 family.

It is found in the mitochondrion membrane. The enzyme catalyses a ubiquinone + NADH + 5 H(+)(in) = a ubiquinol + NAD(+) + 4 H(+)(out). Core subunit of the mitochondrial membrane respiratory chain NADH dehydrogenase (Complex I) that is believed to belong to the minimal assembly required for catalysis. Complex I functions in the transfer of electrons from NADH to the respiratory chain. The immediate electron acceptor for the enzyme is believed to be ubiquinone. This Solanum tuberosum (Potato) protein is NADH-ubiquinone oxidoreductase chain 3 (ND3).